Here is a 577-residue protein sequence, read N- to C-terminus: Arginine--tRNA ligase (577 aa).

The 'HIGH' region signature appears at 122–132; sequence PNVAKEMHVGH.

It belongs to the class-I aminoacyl-tRNA synthetase family. Monomer.

It is found in the cytoplasm. It carries out the reaction tRNA(Arg) + L-arginine + ATP = L-arginyl-tRNA(Arg) + AMP + diphosphate. The sequence is that of Arginine--tRNA ligase from Aliivibrio salmonicida (strain LFI1238) (Vibrio salmonicida (strain LFI1238)).